The sequence spans 230 residues: Ubiquitin carboxyl-terminal hydrolase isozyme L3 (230 aa).

The UCH catalytic domain maps to 5–229; it reads RWLPLEANPE…LRFNAIALSA (225 aa). Residues 8 to 13 form an interaction with ubiquitin region; sequence PLEANP. C95 serves as the catalytic Nucleophile. S130 bears the Phosphoserine mark. An interaction with ubiquitin. Crossover loop which restricts access of large ubiquitin adducts to the active site region spans residues 152 to 159; it reads AHEGQTEA. Catalysis depends on H169, which acts as the Proton donor. The segment at 219-224 is interaction with ubiquitin; that stretch reads ELRFNA.

Belongs to the peptidase C12 family. Preferentially binds diubiquitin; the interaction does not hydrolyze diubiquitin but, in vitro, inhibits the hydrolyzing activity on other substrates. As to expression, ubiquitously expressed, with highest levels in brain, liver, heart, thymus, kidney and testis. Highly expressed in the cauda epididymidis, in meiotic pachytene spermatocytes and post-meiotic spematids. In the retina, enriched in the photoreceptor inner segment.

It localises to the cytoplasm. The catalysed reaction is Thiol-dependent hydrolysis of ester, thioester, amide, peptide and isopeptide bonds formed by the C-terminal Gly of ubiquitin (a 76-residue protein attached to proteins as an intracellular targeting signal).. Inhibited by monoubiquitin and diubiquitin. Functionally, deubiquitinating enzyme (DUB) that controls levels of cellular ubiquitin through processing of ubiquitin precursors and ubiquitinated proteins. Thiol protease that recognizes and hydrolyzes a peptide bond at the C-terminal glycine of either ubiquitin or NEDD8. Has a 10-fold preference for Arg and Lys at position P3'', and exhibits a preference towards 'Lys-48'-linked ubiquitin chains. Deubiquitinates ENAC in apical compartments, thereby regulating apical membrane recycling. Indirectly increases the phosphorylation of IGFIR, AKT and FOXO1 and promotes insulin-signaling and insulin-induced adipogenesis. Required for stress-response retinal, skeletal muscle and germ cell maintenance. May be involved in working memory. Can hydrolyze UBB(+1), a mutated form of ubiquitin which is not effectively degraded by the proteasome. This chain is Ubiquitin carboxyl-terminal hydrolase isozyme L3 (Uchl3), found in Mus musculus (Mouse).